The primary structure comprises 473 residues: Photosystem II CP43 reaction center protein (473 aa).

Residues 1 to 14 (MKILYSLRRFYHVE) constitute a propeptide that is removed on maturation. At Thr15 the chain carries N-acetylthreonine. At Thr15 the chain carries Phosphothreonine. The next 5 membrane-spanning stretches (helical) occupy residues 69-93 (LFEV…PHLA), 134-155 (LLGP…KDRN), 178-200 (KALY…RKIT), 255-275 (KPFA…LSYS), and 291-312 (WFNN…ASQA). Glu367 is a [CaMn4O5] cluster binding site. A helical transmembrane segment spans residues 447 to 471 (RARAAAAGFEKGIDRDLEPVLYMNP).

It belongs to the PsbB/PsbC family. PsbC subfamily. As to quaternary structure, PSII is composed of 1 copy each of membrane proteins PsbA, PsbB, PsbC, PsbD, PsbE, PsbF, PsbH, PsbI, PsbJ, PsbK, PsbL, PsbM, PsbT, PsbX, PsbY, PsbZ, Psb30/Ycf12, at least 3 peripheral proteins of the oxygen-evolving complex and a large number of cofactors. It forms dimeric complexes. Binds multiple chlorophylls and provides some of the ligands for the Ca-4Mn-5O cluster of the oxygen-evolving complex. It may also provide a ligand for a Cl- that is required for oxygen evolution. PSII binds additional chlorophylls, carotenoids and specific lipids. is required as a cofactor. Phosphorylated on threonine residue(s); phosphorylation increases with increasing light levels.

The protein resides in the plastid. It is found in the chloroplast thylakoid membrane. Its function is as follows. One of the components of the core complex of photosystem II (PSII). It binds chlorophyll and helps catalyze the primary light-induced photochemical processes of PSII. PSII is a light-driven water:plastoquinone oxidoreductase, using light energy to abstract electrons from H(2)O, generating O(2) and a proton gradient subsequently used for ATP formation. This Secale cereale (Rye) protein is Photosystem II CP43 reaction center protein.